Here is a 127-residue protein sequence, read N- to C-terminus: Fatty acid-binding protein, liver-type (127 aa).

Belongs to the calycin superfamily. Fatty-acid binding protein (FABP) family.

It is found in the cytoplasm. The polypeptide is Fatty acid-binding protein, liver-type (fabp1) (Epinephelus coioides (Orange-spotted grouper)).